The sequence spans 354 residues: Adenine deaminase (354 aa).

Positions 19, 21, and 211 each coordinate Zn(2+). Glu214 functions as the Proton donor in the catalytic mechanism. Asp291 contacts Zn(2+). Residue Asp292 participates in substrate binding.

This sequence belongs to the metallo-dependent hydrolases superfamily. Adenosine and AMP deaminases family. Adenine deaminase type 2 subfamily. Requires Zn(2+) as cofactor.

It is found in the cytoplasm. It localises to the nucleus. It catalyses the reaction adenine + H2O + H(+) = hypoxanthine + NH4(+). Functionally, catalyzes the hydrolytic deamination of adenine to hypoxanthine. Plays an important role in the purine salvage pathway and in nitrogen catabolism. The chain is Adenine deaminase (aah1) from Aspergillus fumigatus (strain ATCC MYA-4609 / CBS 101355 / FGSC A1100 / Af293) (Neosartorya fumigata).